The sequence spans 101 residues: Protein Tat (101 aa).

The tract at residues 1 to 24 (MEPVDPNLEPWNHPGSQPKTACNN) is interaction with human CREBBP. A transactivation region spans residues 1-48 (MEPVDPNLEPWNHPGSQPKTACNNCYCKRCSYHCLVCFQTKGLGISYG). Zn(2+) contacts are provided by cysteine 22, cysteine 25, and cysteine 27. A cysteine-rich region spans residues 22-37 (CNNCYCKRCSYHCLVC). Lysine 28 carries the N6-acetyllysine; by host PCAF modification. 4 residues coordinate Zn(2+): cysteine 30, histidine 33, cysteine 34, and cysteine 37. The tract at residues 38–48 (FQTKGLGISYG) is core. The interval 47 to 101 (YGRKKRRQRRSAPPSSEDHQNPIPKQPLPQTRGDQTGSEESKKKVESKTETDPFD) is disordered. The Nuclear localization signal, RNA-binding (TAR), and protein transduction signature appears at 49–57 (RKKRRQRRS). Residues 49–86 (RKKRRQRRSAPPSSEDHQNPIPKQPLPQTRGDQTGSEE) are interaction with the host capping enzyme RNGTT. Lysine 50 and lysine 51 each carry N6-acetyllysine; by host EP300 and GCN5L2. 2 positions are modified to asymmetric dimethylarginine; by host PRMT6: arginine 52 and arginine 53. Residue lysine 71 forms a Glycyl lysine isopeptide (Lys-Gly) (interchain with G-Cter in ubiquitin) linkage. Residues 78 to 80 (RGD) carry the Cell attachment site motif. Residues 85–101 (EESKKKVESKTETDPFD) show a composition bias toward basic and acidic residues.

Belongs to the lentiviruses Tat family. In terms of assembly, interacts with host CCNT1. Associates with the P-TEFb complex composed at least of Tat, P-TEFb (CDK9 and CCNT1), TAR RNA, RNA Pol II. Recruits the HATs CREBBP, TAF1/TFIID, EP300, PCAF and GCN5L2. Interacts with host KAT5/Tip60; this interaction targets the latter to degradation. Interacts with the host deacetylase SIRT1. Interacts with host capping enzyme RNGTT; this interaction stimulates RNGTT. Binds to host KDR, and to the host integrins ITGAV/ITGB3 and ITGA5/ITGB1. Interacts with host KPNB1/importin beta-1 without previous binding to KPNA1/importin alpha-1. Interacts with EIF2AK2. Interacts with host nucleosome assembly protein NAP1L1; this interaction may be required for the transport of Tat within the nucleus, since the two proteins interact at the nuclear rim. Interacts with host C1QBP/SF2P32; this interaction involves lysine-acetylated Tat. Interacts with the host chemokine receptors CCR2, CCR3 and CXCR4. Interacts with host DPP4/CD26; this interaction may trigger an anti-proliferative effect. Interacts with host LDLR. Interacts with the host extracellular matrix metalloproteinase MMP1. Interacts with host PRMT6; this interaction mediates Tat's methylation. Interacts with, and is ubiquitinated by MDM2/Hdm2. Interacts with host PSMC3 and HTATIP2. Interacts with STAB1; this interaction may overcome SATB1-mediated repression of IL2 and IL2RA (interleukin) in T cells by binding to the same domain than HDAC1. Interacts (when acetylated) with human CDK13, thereby increasing HIV-1 mRNA splicing and promoting the production of the doubly spliced HIV-1 protein Nef. Interacts with host TBP; this interaction modulates the activity of transcriptional pre-initiation complex. Interacts with host RELA. Interacts with host PLSCR1; this interaction negatively regulates Tat transactivation activity by altering its subcellular distribution. In terms of processing, asymmetrical arginine methylation by host PRMT6 seems to diminish the transactivation capacity of Tat and affects the interaction with host CCNT1. Post-translationally, acetylation by EP300, CREBBP, GCN5L2/GCN5 and PCAF regulates the transactivation activity of Tat. EP300-mediated acetylation of Lys-50 promotes dissociation of Tat from the TAR RNA through the competitive binding to PCAF's bromodomain. In addition, the non-acetylated Tat's N-terminus can also interact with PCAF. PCAF-mediated acetylation of Lys-28 enhances Tat's binding to CCNT1. Lys-50 is deacetylated by SIRT1. Polyubiquitination by host MDM2 does not target Tat to degradation, but activates its transactivation function and fosters interaction with CCNT1 and TAR RNA. In terms of processing, phosphorylated by EIF2AK2 on serine and threonine residues adjacent to the basic region important for TAR RNA binding and function. Phosphorylation of Tat by EIF2AK2 is dependent on the prior activation of EIF2AK2 by dsRNA.

The protein localises to the host nucleus. The protein resides in the host nucleolus. It localises to the host cytoplasm. Its subcellular location is the secreted. In terms of biological role, transcriptional activator that increases RNA Pol II processivity, thereby increasing the level of full-length viral transcripts. Recognizes a hairpin structure at the 5'-LTR of the nascent viral mRNAs referred to as the transactivation responsive RNA element (TAR) and recruits the cyclin T1-CDK9 complex (P-TEFb complex) that will in turn hyperphosphorylate the RNA polymerase II to allow efficient elongation. The CDK9 component of P-TEFb and other Tat-activated kinases hyperphosphorylate the C-terminus of RNA Pol II that becomes stabilized and much more processive. Other factors such as HTATSF1/Tat-SF1, SUPT5H/SPT5, and HTATIP2 are also important for Tat's function. Besides its effect on RNA Pol II processivity, Tat induces chromatin remodeling of proviral genes by recruiting the histone acetyltransferases (HATs) CREBBP, EP300 and PCAF to the chromatin. This also contributes to the increase in proviral transcription rate, especially when the provirus integrates in transcriptionally silent region of the host genome. To ensure maximal activation of the LTR, Tat mediates nuclear translocation of NF-kappa-B by interacting with host RELA. Through its interaction with host TBP, Tat may also modulate transcription initiation. Tat can reactivate a latently infected cell by penetrating in it and transactivating its LTR promoter. In the cytoplasm, Tat is thought to act as a translational activator of HIV-1 mRNAs. Its function is as follows. Extracellular circulating Tat can be endocytosed by surrounding uninfected cells via the binding to several surface receptors such as CD26, CXCR4, heparan sulfate proteoglycans (HSPG) or LDLR. Neurons are rarely infected, but they internalize Tat via their LDLR. Through its interaction with nuclear HATs, Tat is potentially able to control the acetylation-dependent cellular gene expression. Modulates the expression of many cellular genes involved in cell survival, proliferation or in coding for cytokines or cytokine receptors. Tat plays a role in T-cell and neurons apoptosis. Tat induced neurotoxicity and apoptosis probably contribute to neuroAIDS. Circulating Tat also acts as a chemokine-like and/or growth factor-like molecule that binds to specific receptors on the surface of the cells, affecting many cellular pathways. In the vascular system, Tat binds to ITGAV/ITGB3 and ITGA5/ITGB1 integrins dimers at the surface of endothelial cells and competes with bFGF for heparin-binding sites, leading to an excess of soluble bFGF. This Human immunodeficiency virus type 1 group M subtype C (isolate 92BR025) (HIV-1) protein is Protein Tat.